The primary structure comprises 198 residues: MEHFISLFVRAVFIENMALAFFLGMCTFLAVSKNVTTAFGLGIAVTVVLGISVPANNLVYNLVLRDGALVEGVDLSFLNFITFIGVIAALVQILEMILDRYFPSLYNALGIFLPLITVNCAIFGGVSFMAQRDYNFSESIVYGFGSGIGWMLAIVLLASIREKMKYADVPAGLKGLGITFVTTGLMALGFMSFSGVQL.

Helical transmembrane passes span 11–31 (AVFIENMALAFFLGMCTFLAV), 35–55 (VTTAFGLGIAVTVVLGISVPA), 77–97 (FLNFITFIGVIAALVQILEMI), 109–129 (LGIFLPLITVNCAIFGGVSFM), 140–160 (IVYGFGSGIGWMLAIVLLASI), and 176–196 (LGITFVTTGLMALGFMSFSGV).

This sequence belongs to the NqrDE/RnfAE family. Composed of six subunits; NqrA, NqrB, NqrC, NqrD, NqrE and NqrF.

It is found in the cell inner membrane. It carries out the reaction a ubiquinone + n Na(+)(in) + NADH + H(+) = a ubiquinol + n Na(+)(out) + NAD(+). NQR complex catalyzes the reduction of ubiquinone-1 to ubiquinol by two successive reactions, coupled with the transport of Na(+) ions from the cytoplasm to the periplasm. NqrA to NqrE are probably involved in the second step, the conversion of ubisemiquinone to ubiquinol. This Photorhabdus laumondii subsp. laumondii (strain DSM 15139 / CIP 105565 / TT01) (Photorhabdus luminescens subsp. laumondii) protein is Na(+)-translocating NADH-quinone reductase subunit E.